Reading from the N-terminus, the 161-residue chain is Effector CFEM5 (161 aa).

The signal sequence occupies residues 1 to 23 (MFSLTKSVLFTSIVAIAAQATTA). The CFEM domain occupies 24 to 126 (VSSPTQTSLP…KVLDAVVASA (103 aa)). Cystine bridges form between cysteine 46–cysteine 78, cysteine 56–cysteine 63, and cysteine 65–cysteine 100. Position 60 (aspartate 60) interacts with heme.

The protein belongs to the RBT5 family. As to quaternary structure, interacts with Z.mays LRR5; the interaction is direct. Interacts with Z.mays WAK17 isoform 2; the interaction is direct.

Its subcellular location is the membrane. The protein resides in the secreted. In terms of biological role, suppresses host programmed cell death during infection by binding to Z.mays WAK17 isoform 2 and Z.mays LRR5, to prevent activation of Z.mays WAK17 isoform 1 and the downstream hypersensitive response. The protein is Effector CFEM5 of Gibberella zeae (strain ATCC MYA-4620 / CBS 123657 / FGSC 9075 / NRRL 31084 / PH-1) (Wheat head blight fungus).